The sequence spans 182 residues: Ribosome-recycling factor (182 aa).

The tract at residues 136-156 (IRKQEKNSDISKDESRDLQDK) is disordered.

It belongs to the RRF family.

Its subcellular location is the cytoplasm. In terms of biological role, responsible for the release of ribosomes from messenger RNA at the termination of protein biosynthesis. May increase the efficiency of translation by recycling ribosomes from one round of translation to another. This Trichodesmium erythraeum (strain IMS101) protein is Ribosome-recycling factor.